A 220-amino-acid chain; its full sequence is Thiopurine S-methyltransferase (220 aa).

Trp14, Leu49, Glu70, and Arg127 together coordinate S-adenosyl-L-methionine.

The protein belongs to the class I-like SAM-binding methyltransferase superfamily. TPMT family.

Its subcellular location is the cytoplasm. The catalysed reaction is S-adenosyl-L-methionine + a thiopurine = S-adenosyl-L-homocysteine + a thiopurine S-methylether.. The protein is Thiopurine S-methyltransferase of Gluconobacter oxydans (strain 621H) (Gluconobacter suboxydans).